A 367-amino-acid polypeptide reads, in one-letter code: Anhydro-N-acetylmuramic acid kinase (367 aa).

Residue 13-20 (GTSMDGAD) participates in ATP binding.

This sequence belongs to the anhydro-N-acetylmuramic acid kinase family.

The enzyme catalyses 1,6-anhydro-N-acetyl-beta-muramate + ATP + H2O = N-acetyl-D-muramate 6-phosphate + ADP + H(+). The protein operates within amino-sugar metabolism; 1,6-anhydro-N-acetylmuramate degradation. It functions in the pathway cell wall biogenesis; peptidoglycan recycling. Functionally, catalyzes the specific phosphorylation of 1,6-anhydro-N-acetylmuramic acid (anhMurNAc) with the simultaneous cleavage of the 1,6-anhydro ring, generating MurNAc-6-P. Is required for the utilization of anhMurNAc either imported from the medium or derived from its own cell wall murein, and thus plays a role in cell wall recycling. This chain is Anhydro-N-acetylmuramic acid kinase, found in Neisseria meningitidis serogroup B (strain ATCC BAA-335 / MC58).